The primary structure comprises 258 residues: Snake venom serine protease BPA (258 aa).

Positions 1–18 (MVLIRVIANLLILQLSNA) are cleaved as a signal peptide. Positions 19-24 (QKSSEL) are excised as a propeptide. Positions 25 to 249 (VIGGDECNIT…YLPWIQSIIA (225 aa)) constitute a Peptidase S1 domain. 6 disulfide bridges follow: Cys-31/Cys-163, Cys-50/Cys-66, Cys-98/Cys-256, Cys-142/Cys-210, Cys-174/Cys-189, and Cys-200/Cys-225. 2 N-linked (GlcNAc...) asparagine glycosylation sites follow: Asn-32 and Asn-44. His-65 (charge relay system) is an active-site residue. N-linked (GlcNAc...) asparagine glycosylation is present at Asn-103. Asp-110 functions as the Charge relay system in the catalytic mechanism. A glycan (N-linked (GlcNAc...) asparagine) is linked at Asn-121. O-linked (GalNAc...) serine glycosylation occurs at Ser-133. N-linked (GlcNAc...) asparagine glycans are attached at residues Asn-154 and Asn-170. Ser-204 (charge relay system) is an active-site residue. N-linked (GlcNAc...) asparagine glycosylation is found at Asn-211 and Asn-251. O-linked (GalNAc...) threonine glycosylation is present at Thr-255.

It belongs to the peptidase S1 family. Snake venom subfamily. Monomer. N- and O-glycosylated. The glycosylation has a stabilizing effect on the protein. However, the removal of part of the carbohydrates enhances the proteolytic activity of the SVSP towards human and rat fibrinogen. Expressed by the venom gland.

It is found in the secreted. Inhibited by diisopropylfluorophosphate (DFP), but not by SBTI, Antithrombin III/heparin and BPTI, probably due to steric hindrance caused by its huge carbohydrate moietie. In terms of biological role, snake venom serine protease that has a potent and selective fibrinogenolytic activity. Preferentially cleaves the alpha-chain (FGA) of human and rat fibrinogen at Arg-|-Gly bonds, and slowly digests the beta-chain (FGB). In vivo, completely avoids thrombus formation induced in rat, decreases the fibrinogen plasma level and prolonges the recalcification time. Possesses esterolytic and amidolytic activities. In Bothrops jararaca (Jararaca), this protein is Snake venom serine protease BPA.